Reading from the N-terminus, the 142-residue chain is Negative cofactor 2 complex subunit alpha (142 aa).

Residues 1-11 show a composition bias toward polar residues; sequence MADQVPVTTQL. Positions 1 to 43 are disordered; the sequence is MADQVPVTTQLPPIKPEHEVPLDAGGSPVGNMGTNSNNNNELG. Ser27 carries the post-translational modification Phosphoserine. Positions 29 to 137 constitute a Histone-fold domain; that stretch reads VGNMGTNSNN…LCVEEGQTQP (109 aa). Ser141 carries the post-translational modification Phosphoserine.

The protein belongs to the NC2 alpha/DRAP1 family. As to quaternary structure, component of the NC2 (negative cofactor 2) complex composed of BUR6 and NCB2. The NC2 complex associates with SPT15/TBP. Interacts with SPT15/TBP.

Its subcellular location is the nucleus. Its function is as follows. Component of the NC2 complex which represses RNA polymerase II transcription through binding to SPT15/TBP and thereby inhibiting the assembly of the preinitiation complex. The NC2 complex may also mediate transcriptional activation from TATA-driven promoters through association with SPT15/TBP. This Saccharomyces cerevisiae (strain ATCC 204508 / S288c) (Baker's yeast) protein is Negative cofactor 2 complex subunit alpha (BUR6).